The following is a 536-amino-acid chain: Cytochrome P450 monooxygenase pbrC (536 aa).

Residues 20 to 39 traverse the membrane as a helical segment; sequence VMLPALVGFAFLIYQAFFAI. Cysteine 479 lines the heme pocket.

It belongs to the cytochrome P450 family. The cofactor is heme.

Its subcellular location is the membrane. It participates in secondary metabolite biosynthesis; terpenoid biosynthesis. Functionally, cytochrome P450 monooxygenase; part of the gene cluster that mediates the biosynthesis of the sesquiterpenoid aspterric acid (AA), an inhibitor of dihydroxy-acid dehydratase (DHAD) effective as an herbicide. PbrC catalyzes the third and last step within the pathway and converts the alpha-epoxy carboxylate intermediate produced by the cytochrome P450 monooxygenase pbrB from (-)daucane into the tricyclic aspterric acid. The sequence is that of Cytochrome P450 monooxygenase pbrC from Penicillium brasilianum.